The primary structure comprises 1258 residues: Phosphatidylinositol 3,4,5-trisphosphate 5-phosphatase 2 (1258 aa).

The SH2 domain occupies 21–117 (WYHRDLSRAA…GLVCALLLPV (97 aa)). A compositionally biased stretch (basic and acidic residues) spans 119 to 132 (GEREPDPPDDRDAS). The disordered stretch occupies residues 119 to 180 (GEREPDPPDD…AESAPNGLST (62 aa)). Phosphoserine is present on Ser132. Polar residues predominate over residues 145–155 (SGSTSISAPTG). Over residues 156-166 (PSSPLPAPETP) the composition is skewed to pro residues. Position 165 is a phosphothreonine (Thr165). Residues Ser241 and Ser352 each carry the phosphoserine modification. Phosphotyrosine is present on Tyr886. Ser890 carries the phosphoserine modification. Residues 897–1118 (GAKSKAPSVS…FLGEVASGDD (222 aa)) are disordered. Pro residues predominate over residues 938-950 (PPPTGRPPAPPRA). The SH3-binding motif lies at 944-949 (PPAPPR). Over residues 951-965 (APREEPLTPRLKPEG) the composition is skewed to basic and acidic residues. Thr958 is modified (phosphothreonine). The short motif at 983–986 (NPAY) is the NPXY motif element. At Tyr986 the chain carries Phosphotyrosine; by SRC. 3 stretches are compositionally biased toward pro residues: residues 996-1007 (LLPPEPPSPARA), 1048-1059 (LPPPDFPPPPLP), and 1087-1104 (GPPP…PGPS). Phosphoserine is present on Ser1131. 2 positions are modified to phosphotyrosine: Tyr1135 and Tyr1162. Residues 1196 to 1258 (LGEAGMSAWL…LLLDTLQLSK (63 aa)) form the SAM domain. Ser1257 bears the Phosphoserine mark.

The protein belongs to the inositol 1,4,5-trisphosphate 5-phosphatase family. As to quaternary structure, interacts with tyrosine phosphorylated form of SHC1. Interacts with EGFR. Upon stimulation by the EGF signaling pathway, it forms a complex with SHC1 and EGFR. Interacts with cytoskeletal protein SORBS3/vinexin, promoting its localization to the periphery of cells. Forms a complex with filamin (FLNA or FLNB), actin, GPIb (GP1BA or GP1BB) that regulates cortical and submembraneous actin. Interacts with c-Met/MET, when c-Met/MET is phosphorylated on 'Tyr-1356'. Interacts with p130Cas/BCAR1. Interacts with CENTD3/ARAP3 via its SAM domain. Interacts with c-Cbl/CBL and CAP/SORBS1. Interacts with activated EPHA2 receptor. Interacts with receptor FCGR2A. Interacts with receptor FCGR2B. Interacts with tyrosine kinase ABL1. Interacts with tyrosine kinase TEC. Interacts with CSF1R. Interacts (via N-terminus) with SH3YL1 (via SH3 domain). Interacts with FCRL6 (tyrosine phosphorylated form). Interacts (via SH2 domain) with tyrosine phosphorylated KLRC1 (via ITIM). Interacts with NEDD9/HEF1. In terms of processing, tyrosine phosphorylated by the members of the SRC family after exposure to a diverse array of extracellular stimuli such as insulin, growth factors such as EGF or PDGF, chemokines, integrin ligands and hypertonic and oxidative stress. May be phosphorylated upon IgG receptor FCGR2B-binding. Phosphorylated at Tyr-986 following cell attachment and spreading. Phosphorylated at Tyr-1162 following EGF signaling pathway stimulation. Phosphorylated at Thr-958 in response to PDGF. As to expression, widely expressed, most prominently in skeletal muscle, heart and brain. Present in platelets. Expressed in transformed myeloid cells and in primary macrophages, but not in peripheral blood monocytes.

It localises to the cytoplasm. The protein localises to the cytosol. It is found in the cytoskeleton. The protein resides in the membrane. Its subcellular location is the cell projection. It localises to the filopodium. The protein localises to the lamellipodium. It is found in the basal cell membrane. The protein resides in the nucleus. Its subcellular location is the nucleus speckle. It localises to the spindle pole. The catalysed reaction is a 1,2-diacyl-sn-glycero-3-phospho-(1D-myo-inositol-3,4,5-trisphosphate) + H2O = a 1,2-diacyl-sn-glycero-3-phospho-(1D-myo-inositol-3,4-bisphosphate) + phosphate. It carries out the reaction 1,2-dioctanoyl-sn-glycero-3-phospho-(1D-myo-inositol-3,4,5-trisphosphate) + H2O = 1,2-dioctanoyl-sn-glycero-3-phospho-(1D-myo-inositol-3,4-bisphosphate) + phosphate. The enzyme catalyses 1,2-dihexadecanoyl-sn-glycero-3-phospho-(1D-myo-inositol-3,4,5-trisphosphate) + H2O = 1,2-dihexadecanoyl-sn-glycero-3-phospho-(1D-myo-inositol-3,4-bisphosphate) + phosphate. Its activity is regulated as follows. Activated upon translocation to the sites of synthesis of PtdIns(3,4,5)P3 in the membrane. Enzymatic activity is enhanced in the presence of phosphatidylserine. Functionally, phosphatidylinositol (PtdIns) phosphatase that specifically hydrolyzes the 5-phosphate of phosphatidylinositol-3,4,5-trisphosphate (PtdIns(3,4,5)P3) to produce PtdIns(3,4)P2, thereby negatively regulating the PI3K (phosphoinositide 3-kinase) pathways. Required for correct mitotic spindle orientation and therefore progression of mitosis. Plays a central role in regulation of PI3K-dependent insulin signaling, although the precise molecular mechanisms and signaling pathways remain unclear. While overexpression reduces both insulin-stimulated MAP kinase and Akt activation, its absence does not affect insulin signaling or GLUT4 trafficking. Confers resistance to dietary obesity. May act by regulating AKT2, but not AKT1, phosphorylation at the plasma membrane. Part of a signaling pathway that regulates actin cytoskeleton remodeling. Required for the maintenance and dynamic remodeling of actin structures as well as in endocytosis, having a major impact on ligand-induced EGFR internalization and degradation. Participates in regulation of cortical and submembraneous actin by hydrolyzing PtdIns(3,4,5)P3 thereby regulating membrane ruffling. Regulates cell adhesion and cell spreading. Required for HGF-mediated lamellipodium formation, cell scattering and spreading. Acts as a negative regulator of EPHA2 receptor endocytosis by inhibiting via PI3K-dependent Rac1 activation. Acts as a regulator of neuritogenesis by regulating PtdIns(3,4,5)P3 level and is required to form an initial protrusive pattern, and later, maintain proper neurite outgrowth. Acts as a negative regulator of the FC-gamma-RIIA receptor (FCGR2A). Mediates signaling from the FC-gamma-RIIB receptor (FCGR2B), playing a central role in terminating signal transduction from activating immune/hematopoietic cell receptor systems. Involved in EGF signaling pathway. Upon stimulation by EGF, it is recruited by EGFR and dephosphorylates PtdIns(3,4,5)P3. Plays a negative role in regulating the PI3K-PKB pathway, possibly by inhibiting PKB activity. Down-regulates Fc-gamma-R-mediated phagocytosis in macrophages independently of INPP5D/SHIP1. In macrophages, down-regulates NF-kappa-B-dependent gene transcription by regulating macrophage colony-stimulating factor (M-CSF)-induced signaling. Plays a role in the localization of AURKA and NEDD9/HEF1 to the basolateral membrane at interphase in polarized cysts, thereby mediates cell cycle homeostasis, cell polarization and cilia assembly. Additionally promotion of cilia growth is also facilitated by hydrolysis of (PtdIns(3,4,5)P3) to PtdIns(3,4)P2. Promotes formation of apical membrane-initiation sites during the initial stages of lumen formation via Rho family-induced actin filament organization and CTNNB1 localization to cell-cell contacts. May also hydrolyze PtdIns(1,3,4,5)P4, and could thus affect the levels of the higher inositol polyphosphates like InsP6. Involved in endochondral ossification. This chain is Phosphatidylinositol 3,4,5-trisphosphate 5-phosphatase 2, found in Homo sapiens (Human).